We begin with the raw amino-acid sequence, 3198 residues long: Helicase domino (3198 aa).

Residues 1 to 12 (MNEGNSAGGGHE) show a composition bias toward gly residues. Disordered regions lie at residues 1–27 (MNEGNSAGGGHEGLSPAPPAVPDRVTP), 93–112 (LPQQQQQTAEATAAAAAPAH), and 119–148 (SSTIEASVLPPQAKRQRLDDNEDRTSAASI). Positions 134–143 (QRLDDNEDRT) are enriched in basic and acidic residues. The stretch at 187–212 (KKRILQQKLQILRNLKERHLENVSEY) forms a coiled coil. Disordered regions lie at residues 256–350 (TSAA…SATS) and 391–474 (GGTP…TPNS). 2 stretches are compositionally biased toward polar residues: residues 264 to 281 (QNQKYTTQQTDSVESSLV) and 297 to 329 (NISNSTVKTNTQSQVPSKIGSFTESTPAATESN). Positions 330-350 (SSTTVPGTATSGAATSTSATS) are enriched in low complexity. The span at 391 to 404 (GGTPLLPCNTSAGS) shows a compositional bias: polar residues. The segment covering 452–464 (PGTPTSGSLLSPA) has biased composition (low complexity). Residues 507-579 (LPKLQEPSRP…QELQLKRVAS (73 aa)) enclose the HSA domain. The tract at residues 635–848 (NKSVADTPSL…DMEEQDEQED (214 aa)) is disordered. A compositionally biased stretch (polar residues) spans 638 to 650 (VADTPSLNSSRLT). A compositionally biased stretch (basic and acidic residues) spans 652 to 664 (PKRESDDDFRPES). A phosphoserine mark is found at Ser656, Ser664, and Ser666. Positions 666–696 (SEDDEETIAKAEEDAADVKEEVTALAKESEM) form a coiled coil. Composition is skewed to basic and acidic residues over residues 672–695 (TIAKAEEDAADVKEEVTALAKESE) and 711–721 (ENRDKLMKEEQ). Thr729 is modified (phosphothreonine). Phosphoserine occurs at positions 733, 736, and 744. Residues 741-784 (KEASDDDENTISKQEEAEQEIDHKKEIDELEADNDLSVEQLLAK) adopt a coiled-coil conformation. Positions 753 to 767 (KQEEAEQEIDHKKEI) are enriched in basic and acidic residues. Positions 805–831 (LDSDDDSTAVDSTEESEDAATEDEEDL) are enriched in acidic residues. Phosphothreonine is present on Thr838. In terms of domain architecture, Helicase ATP-binding spans 926–1091 (VTMNERKLNG…WSLMHFLMPY (166 aa)). 939–946 (DEMGLGKT) is an ATP binding site. The disordered stretch occupies residues 1471–1492 (VQKQSIANGKTEPEEETEAEDP). One can recognise a Helicase C-terminal domain in the interval 1662–1812 (TMDRLLRQLK…DMAIEGGNFT (151 aa)). The tract at residues 1828-1856 (EQSEQDESSQEKSENKDRIVATTTLSDTP) is disordered. Positions 1836-1846 (SQEKSENKDRI) are enriched in basic and acidic residues. Residues 1951 to 1996 (AAWTAEQLRAAEAELEAQKREWEANRLAAMHKEEELLKQETEAEEM) adopt a coiled-coil conformation. Residues 2061 to 2100 (KEHKRSRTDAGYDGSRRPNKMRREDNYVPPRSLFDRPTPQ) are disordered. Residues 2067–2086 (RTDAGYDGSRRPNKMRREDN) are compositionally biased toward basic and acidic residues. A Myb-like domain is found at 2136-2205 (TEPEAMAEWC…QCRWRYETHI (70 aa)). The interval 2318-2362 (IREKQRGQQMSQPPVGVGVVQQMQQQSQQQQQPAPPPLPQQQQPQ) is disordered. Low complexity predominate over residues 2325 to 2349 (QQMSQPPVGVGVVQQMQQQSQQQQQ).

This sequence belongs to the SNF2/RAD54 helicase family. SWR1 subfamily. In terms of assembly, component of the Tip60 chromatin-remodeling complex which contains Domino, Tip60, Tra1, Brd8, E(Pc), DMAP1, Pontin, Reptin, Ing3, Act87E, BAP55, Mrg15, MrgBP, Gas41 and YL-1. As to expression, isoform B is present at high levels in ovary, in follicle cells, nurse cells and oocyte. Isoform B is also present in germline and somatic stem cells from the germarium. Isoform A is undetectable in adult ovary (at protein level).

It is found in the nucleus. Its function is as follows. Mediates the ATP-dependent exchange of unmodified histone H2AV for its phosphorylated and acetylated form H2AVK5acS138ph, leading to transcriptional regulation of selected genes by chromatin remodeling. Involved in Notch signaling. Represses E2F target genes. Required for somatic stem cell self-renewal but not for germline stem cell self-renewal. Involved in oogenesis. This Drosophila melanogaster (Fruit fly) protein is Helicase domino (dom).